The sequence spans 1396 residues: Integrin alpha-PS2 (1396 aa).

The first 31 residues, 1–31 (MSGDSIHRRRMALHCPITSLILLLIAMSAHG), serve as a signal peptide directing secretion. The Extracellular segment spans residues 32–1341 (YNIDLPSYVR…EPEPLQVPDV (1310 aa)). 7 FG-GAP repeats span residues 36 to 106 (LPSY…DCKL), 117 to 174 (NVDK…FTSH), 186 to 239 (RTNN…FPFK), 266 to 317 (STSE…RWNM), 318 to 383 (ANIF…TEEK), 386 to 445 (TTEH…GPLA), and 452 to 514 (KSEQ…FASN). N-linked (GlcNAc...) asparagine glycosylation occurs at Asn69. N-linked (GlcNAc...) asparagine glycosylation is present at Asn209. An N-linked (GlcNAc...) asparagine glycan is attached at Asn322. Asn584, Asn598, Asn741, Asn783, Asn833, and Asn959 each carry an N-linked (GlcNAc...) asparagine glycan. Disordered regions lie at residues 960–1107 (STDA…LGTL) and 1159–1246 (PGFQ…KPLQ). The span at 963-979 (AGDKLSPKQVEQRRQED) shows a compositional bias: basic and acidic residues. The segment covering 997-1006 (QAVQEPQVNQ) has biased composition (polar residues). Asn1005 carries an N-linked (GlcNAc...) asparagine glycan. Low complexity-rich tracts occupy residues 1007–1021 (TSFT…SSGS) and 1060–1071 (QQQQQHQQLLLA). Over residues 1082 to 1099 (VTFNDKSQFGGRNNNFHT) the composition is skewed to polar residues. Composition is skewed to low complexity over residues 1162–1182 (QGQT…GYQT) and 1217–1226 (SSSSSSSSSS). N-linked (GlcNAc...) asparagine glycosylation is found at Asn1299 and Asn1307. The chain crosses the membrane as a helical span at residues 1342–1366 (VPLWVVVLAACAGALIFLLLVWLLY). The Cytoplasmic segment spans residues 1367 to 1396 (KCGFFNRNRPTDHSQERQPLRNGYHGDEHL). Positions 1377–1396 (TDHSQERQPLRNGYHGDEHL) are disordered.

This sequence belongs to the integrin alpha chain family. Heterodimer of an alpha and a beta subunit. The alpha subunit is composed of a heavy and a light chain linked by a disulfide bond. Alpha-PS2 associates with beta-PS. The heavy-light chain cleavage site is either in 1230-1231, or 1233-1234, or 1243-1244. In ovaries, highly expressed in follicle cells. At syncytial blastoderm stage, expressed in the embryonic mesodermal precursors but not in the ectoderm. At embryonic stages 7 and 10, expression is restricted to the mesoderm. At stage 12, expressed in the gonadal sheath and the interstitial cells of the gonad. In stage 16 embryos, expressed in the somatic and visceral muscles where localizes to sites of attachment between adjacent muscles. In third larval instar wing imaginal disk, expressed in the ventral compartment and in a subset of adepithelial and peripodial cells (at protein level).

It localises to the apical cell membrane. The protein localises to the lateral cell membrane. It is found in the basal cell membrane. Functionally, alpha-PS2/beta-PS is a receptor for Tig, wb and Ten-m. Involved in the function and/or development of the olfactory system. The chain is Integrin alpha-PS2 (if) from Drosophila melanogaster (Fruit fly).